The chain runs to 434 residues: Xylose isomerase (434 aa).

Residues histidine 100 and aspartate 103 contribute to the active site. Mg(2+) is bound by residues glutamate 231, glutamate 267, histidine 270, aspartate 295, aspartate 306, aspartate 308, and aspartate 338.

The protein belongs to the xylose isomerase family. As to quaternary structure, homotetramer. The cofactor is Mg(2+).

It is found in the cytoplasm. It carries out the reaction alpha-D-xylose = alpha-D-xylulofuranose. The polypeptide is Xylose isomerase (Ruegeria pomeroyi (strain ATCC 700808 / DSM 15171 / DSS-3) (Silicibacter pomeroyi)).